The primary structure comprises 445 residues: MTRKYFGTDGIRGTVGQSPITPDFVLRLAHAVGRVLKKSEARPTVLIGKDTRISGYMLESALESGFNSAGVDVVLLGPLPTPGVAYLTRAQRASLGVVISASHNAYPDNGIKFFSAQGTKLDDAWELAVEAALEEAPVWVDSANLGKARRLNDAPGRYIEFCKSTFANDLTLRGMKLVVDAAHGAAYQVAPNVFHELGAEVSSIGCAPDGLNINKGFGATHPAALVEAVTAQKADYGIALDGDADRLQLVDASGRLFNGDELLYLMVAERIARGDKPAGVVGTLMTNKAIEVALRGQGIELVRAKVGDRYVLEELEKRGWLLGGEGSGHLLALDRHTTGDGIVSALQVLQACVRSGKTVAQLLAEITLFPQVLINVRLTPGQDWKNNDALAGETRRIEAELGDSGRVLIRASGTEPLVRVMVEARDAKQAQSCAQRLAATLEPAR.

S102 functions as the Phosphoserine intermediate in the catalytic mechanism. Residues S102, D241, D243, and D245 each contribute to the Mg(2+) site. S102 bears the Phosphoserine mark.

The protein belongs to the phosphohexose mutase family. Mg(2+) is required as a cofactor. Post-translationally, activated by phosphorylation.

It carries out the reaction alpha-D-glucosamine 1-phosphate = D-glucosamine 6-phosphate. Its function is as follows. Catalyzes the conversion of glucosamine-6-phosphate to glucosamine-1-phosphate. The chain is Phosphoglucosamine mutase from Variovorax paradoxus (strain S110).